Here is a 92-residue protein sequence, read N- to C-terminus: Acylphosphatase (92 aa).

In terms of domain architecture, Acylphosphatase-like spans 7–92; sequence KTRCTISGRV…DPAPAEFSVG (86 aa). Catalysis depends on residues arginine 22 and asparagine 40.

Belongs to the acylphosphatase family.

It carries out the reaction an acyl phosphate + H2O = a carboxylate + phosphate + H(+). The polypeptide is Acylphosphatase (acyP) (Halorhodospira halophila (strain DSM 244 / SL1) (Ectothiorhodospira halophila (strain DSM 244 / SL1))).